A 732-amino-acid polypeptide reads, in one-letter code: Catalase-peroxidase (732 aa).

Positions 1–23 are disordered; it reads MSEQSKCPVTGRTAGHPVAGGGM. The tryptophyl-tyrosyl-methioninium (Trp-Tyr) (with M-246) cross-link spans 97 to 220; the sequence is WHSAGTYRTS…LAAVQMGLIY (124 aa). The Proton acceptor role is filled by histidine 98. Positions 220 to 246 form a cross-link, tryptophyl-tyrosyl-methioninium (Tyr-Met) (with W-97); sequence YVNPEGPDGNPDPVAAGRDIRETFARM. Residue histidine 261 coordinates heme b.

This sequence belongs to the peroxidase family. Peroxidase/catalase subfamily. Homodimer or homotetramer. Heme b is required as a cofactor. Formation of the three residue Trp-Tyr-Met cross-link is important for the catalase, but not the peroxidase activity of the enzyme.

It catalyses the reaction H2O2 + AH2 = A + 2 H2O. The catalysed reaction is 2 H2O2 = O2 + 2 H2O. Bifunctional enzyme with both catalase and broad-spectrum peroxidase activity. In Chlorobium limicola (strain DSM 245 / NBRC 103803 / 6330), this protein is Catalase-peroxidase.